The sequence spans 153 residues: Nucleoside diphosphate kinase (153 aa).

ATP-binding residues include lysine 11, phenylalanine 59, arginine 87, threonine 93, arginine 104, and asparagine 114. Histidine 117 functions as the Pros-phosphohistidine intermediate in the catalytic mechanism.

This sequence belongs to the NDK family. It depends on Mg(2+) as a cofactor.

It catalyses the reaction a 2'-deoxyribonucleoside 5'-diphosphate + ATP = a 2'-deoxyribonucleoside 5'-triphosphate + ADP. The catalysed reaction is a ribonucleoside 5'-diphosphate + ATP = a ribonucleoside 5'-triphosphate + ADP. Functionally, major role in the synthesis of nucleoside triphosphates other than ATP. The ATP gamma phosphate is transferred to the NDP beta phosphate via a ping-pong mechanism, using a phosphorylated active-site intermediate. The sequence is that of Nucleoside diphosphate kinase (swoH) from Emericella nidulans (strain FGSC A4 / ATCC 38163 / CBS 112.46 / NRRL 194 / M139) (Aspergillus nidulans).